We begin with the raw amino-acid sequence, 191 residues long: GDP-mannose pyrophosphatase (191 aa).

GDP-alpha-D-mannose is bound by residues Y17, 38–40 (KRE), R67, and 85–87 (AGL). One can recognise a Nudix hydrolase domain in the interval 43 to 180 (DRGNGATILL…EIRDGKTVLL (138 aa)). 3 residues coordinate Mg(2+): A85, E100, and E104. The Nudix box signature appears at 86–106 (GLLDNDEPEVCIRKEAIEETG). Residues E104, E127, 150–151 (DE), and K176 contribute to the GDP-alpha-D-mannose site. E151 contributes to the Mg(2+) binding site.

Belongs to the Nudix hydrolase family. NudK subfamily. Homodimer. The cofactor is Mg(2+).

The enzyme catalyses GDP-alpha-D-mannose + H2O = alpha-D-mannose 1-phosphate + GMP + 2 H(+). In terms of biological role, nucleoside diphosphate sugar hydrolase that hydrolyzes GDP-mannose as its preferred substrate, yielding GMP and mannose-1-phosphate. This is GDP-mannose pyrophosphatase (nudK) from Salmonella arizonae (strain ATCC BAA-731 / CDC346-86 / RSK2980).